The sequence spans 186 residues: UPF0200 protein Hbut_0338 (186 aa).

ATP is bound at residue 13–20 (GMPGSGKS).

It belongs to the UPF0200 family.

The chain is UPF0200 protein Hbut_0338 from Hyperthermus butylicus (strain DSM 5456 / JCM 9403 / PLM1-5).